The following is a 254-amino-acid chain: Mantle protein (254 aa).

An N-terminal signal peptide occupies residues 1-16 (MLAVLLFAALVATAYS).

In terms of tissue distribution, prismatic layer of shell (at protein level). Expressed primarily in the mantle with highest level in the outer epithelium of the mantle edge and lower level in the mantle pallium.

It is found in the secreted. In Margaritifera margaritifera (Freshwater pearl mussel), this protein is Mantle protein.